The sequence spans 105 residues: Large ribosomal subunit protein uL24 (105 aa).

It belongs to the universal ribosomal protein uL24 family. Part of the 50S ribosomal subunit.

One of two assembly initiator proteins, it binds directly to the 5'-end of the 23S rRNA, where it nucleates assembly of the 50S subunit. In terms of biological role, one of the proteins that surrounds the polypeptide exit tunnel on the outside of the subunit. The protein is Large ribosomal subunit protein uL24 of Clostridium novyi (strain NT).